Here is a 491-residue protein sequence, read N- to C-terminus: Delayed-rectifier potassium channel regulatory subunit KCNS3 (491 aa).

Topologically, residues 1–182 (MVFGEFFHRP…IRMENPAYCL (182 aa)) are cytoplasmic. A helical membrane pass occupies residues 183-204 (SAKLIAISSLSVVLASIVAMCV). Residues 205–220 (HSMSEFQNEDGEVDDP) lie on the Extracellular side of the membrane. A helical transmembrane segment spans residues 221–243 (VLEGVEIACIAWFTGELAIRLVA). Over 244–254 (APSQKKFWKNP) the chain is Cytoplasmic. Residues 255 to 275 (LNIIDFVSIIPFYATLAVDTK) traverse the membrane as a helical segment. Over 276–285 (EEESEDIENM) the chain is Extracellular. A helical; Voltage-sensor transmembrane segment spans residues 286-306 (GKVVQILRLMRIFRILKLARH). The Cytoplasmic segment spans residues 307–321 (SVGLRSLGATLRHSY). Residues 322–343 (HEVGLLLLFLSVGISIFSVLIY) traverse the membrane as a helical segment. Residues 344-357 (SVEKDELASSLTSI) are Extracellular-facing. The helical intramembrane region spans 358 to 369 (PICWWWATISMT). Residues 370–375 (TVGYGD) carry the Selectivity filter motif. An intramembrane segment occupies 370–377 (TVGYGDTH). Over 378–384 (PVTLAGK) the chain is Extracellular. Residues 385–413 (IIASTCIICGILVVALPITIIFNKFSKYY) traverse the membrane as a helical segment. At 414-491 (QKQKDMDVDQ…TASLENCTAK (78 aa)) the chain is on the cytoplasmic side.

Belongs to the potassium channel family. S (TC 1.A.1.2) subfamily. Kv9.3/KCNS3 sub-subfamily. Heterotetramer with KCNB1. Does not form homomultimers. As to expression, expressed in myocytes. Detected in lung, spleen, brain and heart.

The protein localises to the cell membrane. Its function is as follows. Potassium channel regulatory subunit that modulates the delayed rectifier potassium channel activity of KCNB1 by namely slowing down the deactivation and inactivation time constants. While it does not form functional channel on its own, it can form functional heterotetrameric channels with KCNB1. In Rattus norvegicus (Rat), this protein is Delayed-rectifier potassium channel regulatory subunit KCNS3.